The sequence spans 146 residues: Ribosome maturation factor RimP (146 aa).

The protein belongs to the RimP family.

The protein resides in the cytoplasm. Required for maturation of 30S ribosomal subunits. This Dechloromonas aromatica (strain RCB) protein is Ribosome maturation factor RimP.